The following is a 628-amino-acid chain: DNA primase (628 aa).

The CHC2-type zinc finger occupies 40-64 (CPFHEERSPSFSVAEDKQIFHCFGC). The 83-residue stretch at 269 to 351 (NTVLLFEGFM…DLSIVSIPEK (83 aa)) folds into the Toprim domain. Mg(2+)-binding residues include Glu275, Asp319, and Asp321.

Belongs to the DnaG primase family. Monomer. Interacts with DnaB. The cofactor is Zn(2+). Mg(2+) serves as cofactor.

The enzyme catalyses ssDNA + n NTP = ssDNA/pppN(pN)n-1 hybrid + (n-1) diphosphate.. Its function is as follows. RNA polymerase that catalyzes the synthesis of short RNA molecules used as primers for DNA polymerase during DNA replication. The polypeptide is DNA primase (Enterococcus faecalis (strain ATCC 700802 / V583)).